We begin with the raw amino-acid sequence, 300 residues long: Cell surface glycoprotein CD200 receptor 1-A (300 aa).

The N-terminal stretch at 1-24 (MEIAGKAVCVFLLLAIIKLRRSEG) is a signal peptide. The Ig-like V-type domain occupies 25–124 (INRVSANLGH…GNFHRLYHLT (100 aa)). Residues 25–213 (INRVSANLGH…SINCSSSYRD (189 aa)) lie on the Extracellular side of the membrane. Disulfide bonds link Cys40/Cys108 and Cys143/Cys192. 6 N-linked (GlcNAc...) asparagine glycosylation sites follow: Asn45, Asn76, Asn105, Asn171, Asn200, and Asn206. An Ig-like C2-type domain is found at 122–206 (HLTVIVAPRM…ATLNETKSIN (85 aa)). Residues 214–234 (LILCIAIILSFLIIITFMAVI) form a helical membrane-spanning segment. Over 235–300 (YYLKLHGCRF…NLPQGQSPAT (66 aa)) the chain is Cytoplasmic.

It belongs to the CD200R family. Post-translationally, glycosylated. Phosphorylated. In terms of tissue distribution, highly expressed in macrophages, peripheral blood lymphocytes (PBL) and peripheral blood mononuclear cells (PBMC). Weakly expressed in bursa, thymus, spleen, liver and brain.

It is found in the membrane. The protein resides in the secreted. The chain is Cell surface glycoprotein CD200 receptor 1-A (CD200R1A) from Gallus gallus (Chicken).